Reading from the N-terminus, the 131-residue chain is Small ribosomal subunit protein uS11 (131 aa).

This sequence belongs to the universal ribosomal protein uS11 family. In terms of assembly, part of the 30S ribosomal subunit. Interacts with proteins S7 and S18. Binds to IF-3.

Functionally, located on the platform of the 30S subunit, it bridges several disparate RNA helices of the 16S rRNA. Forms part of the Shine-Dalgarno cleft in the 70S ribosome. In Natranaerobius thermophilus (strain ATCC BAA-1301 / DSM 18059 / JW/NM-WN-LF), this protein is Small ribosomal subunit protein uS11.